Reading from the N-terminus, the 378-residue chain is AT-hook motif nuclear-localized protein 5 (378 aa).

3 disordered regions span residues Gln-30–Arg-70, Val-88–Gln-160, and Asn-302–Gly-378. Positions Val-104 to Lys-113 are enriched in basic residues. Residues Lys-105 to Lys-113 carry the Bipartite nuclear localization signal motif. DNA-binding regions (a.T hook) lie at residues Lys-105–Asp-117 and Lys-147–Lys-159. The PPC domain occupies Thr-171–Lys-314. 2 stretches are compositionally biased toward polar residues: residues Glu-316–Gly-327 and Ser-335–Pro-345.

In terms of assembly, interacts with AHL29.

The protein resides in the nucleus. In terms of biological role, transcription factor that specifically binds AT-rich DNA sequences related to the nuclear matrix attachment regions (MARs). This Arabidopsis thaliana (Mouse-ear cress) protein is AT-hook motif nuclear-localized protein 5.